We begin with the raw amino-acid sequence, 151 residues long: Caveolin-3 (151 aa).

At 1-83 (MMTEEHTDLE…RLLSTLLGVP (83 aa)) the chain is on the cytoplasmic side. A Glycyl lysine isopeptide (Lys-Gly) (interchain with G-Cter in SUMO3) cross-link involves residue Lys-38. Residues 64-114 (TFTVSKYWCYRLLSTLLGVPLALLWGFLFACISFCHIWAVVPCIKSYLIEI) are required for interaction with DAG1. The segment at residues 84–104 (LALLWGFLFACISFCHIWAVV) is an intramembrane region (helical). Topologically, residues 105–151 (PCIKSYLIEIQCISHIYSLCIRTFCNPLFAALGQVCSNIKVVLRREG) are cytoplasmic.

It belongs to the caveolin family. Homooligomer. Interacts with DYSF. Interacts with DLG1 and KCNA5; forms a ternary complex. Interacts with DAG1 (via its C-terminal); the interaction prevents binding of DAG1 with DMD. Interacts with TRIM72. Interacts with MUSK; may regulate MUSK signaling. Interacts with POPDC1. Interacts with CAVIN1, CAVIN2 and CAVIN4. Sumoylation with SUMO3 by PIAS4 may reduce agonist-induced internalization and desensitization of adrenergic receptor ABRD2. In terms of tissue distribution, expressed predominantly in muscle.

It is found in the golgi apparatus membrane. Its subcellular location is the cell membrane. The protein resides in the membrane. The protein localises to the caveola. It localises to the sarcolemma. In terms of biological role, may act as a scaffolding protein within caveolar membranes. Interacts directly with G-protein alpha subunits and can functionally regulate their activity. May also regulate voltage-gated potassium channels. Plays a role in the sarcolemma repair mechanism of both skeletal muscle and cardiomyocytes that permits rapid resealing of membranes disrupted by mechanical stress. Mediates the recruitment of CAVIN2 and CAVIN3 proteins to the caveolae. This chain is Caveolin-3, found in Mus musculus (Mouse).